A 384-amino-acid polypeptide reads, in one-letter code: MTNSSSTSTSTTTGGSLLLLCEEEESWAGRRIPVSLLYSGLAIGGTLANGMVIYLVSSFRKLQTTSNAFIVNGCAADLSVCALWMPQEAVLGLLPAGSAEPPGDWDSGGGSYRLLRGGLLGLGLTVSLLSHCLVALNRYLLITRAPATYQVLYQRRHTAGMLALSWALALGLVLLLPPWAPKPGAEPPQVHYPALLAAGALLAQTALLLHCYLGIVRRVRVSVKRVSVLNFHLLHQLPGCAAAAAAFPAAPHAPGAGGAAHPAQPQPLPAALQPRRAQRRLSGLSVLLLCCVFLLATQPLVWVSLASGFSLPVPWGVQAASWLLCCALSALNPLLYTWRNEEFRRSVRSVLPGVGDAAAAAAAATAVPAMSQAQLGTRAAGQHW.

The Extracellular portion of the chain corresponds to 1–35; that stretch reads MTNSSSTSTSTTTGGSLLLLCEEEESWAGRRIPVS. An N-linked (GlcNAc...) asparagine glycan is attached at asparagine 3. Residues 36–56 traverse the membrane as a helical segment; sequence LLYSGLAIGGTLANGMVIYLV. Topologically, residues 57–73 are cytoplasmic; it reads SSFRKLQTTSNAFIVNG. A helical transmembrane segment spans residues 74–94; it reads CAADLSVCALWMPQEAVLGLL. Residues 95–116 lie on the Extracellular side of the membrane; the sequence is PAGSAEPPGDWDSGGGSYRLLR. The chain crosses the membrane as a helical span at residues 117-136; it reads GGLLGLGLTVSLLSHCLVAL. Topologically, residues 137–158 are cytoplasmic; that stretch reads NRYLLITRAPATYQVLYQRRHT. A helical membrane pass occupies residues 159–179; it reads AGMLALSWALALGLVLLLPPW. Over 180–195 the chain is Extracellular; sequence APKPGAEPPQVHYPAL. Residues 196–216 form a helical membrane-spanning segment; it reads LAAGALLAQTALLLHCYLGIV. The Cytoplasmic portion of the chain corresponds to 217 to 285; it reads RRVRVSVKRV…RAQRRLSGLS (69 aa). The chain crosses the membrane as a helical span at residues 286 to 306; it reads VLLLCCVFLLATQPLVWVSLA. The Extracellular segment spans residues 307 to 310; sequence SGFS. Residues 311-331 form a helical membrane-spanning segment; sequence LPVPWGVQAASWLLCCALSAL. The Cytoplasmic segment spans residues 332-384; sequence NPLLYTWRNEEFRRSVRSVLPGVGDAAAAAAAATAVPAMSQAQLGTRAAGQHW.

This sequence belongs to the G-protein coupled receptor 1 family. In terms of tissue distribution, expressed predominantly in the striatum. Expressed also in olfactory tubercle, nucleus accumbens, amygdala, and neocortex. Spinal cord, pons, and medulla expression remains discrete. Also expressed in peripheral tissues, including adrenal cortex (16 dpc to 21 dpc) and cochlear ganglia (19 dpc to P3) and also at moderate levels in retina (18 dpc to 19 dpc) and spleen (21 dpc to P7).

It is found in the cell membrane. Its subcellular location is the cell projection. The protein localises to the cilium membrane. The protein resides in the cytoplasm. It localises to the nucleus. In terms of biological role, orphan G protein-coupled receptor implicated in a large repertoire of behavioral responses that engage motor activities, spatial learning, and emotional processing. May play a role in the regulation of cognitive and motor function. Couples with the heterotrimeric G protein complex of the G(i) subfamily, consisting of GNAI1, GNB1 and GNG2, thereby acting through a G(i)-mediated pathway. Plays a role in the attenuation of D1 dopamine receptor (D1R)-mediated cAMP response in ciliated cells. In non-ciliated cells, involved in the inhibition of the beta-2 adrenergic receptor (B2AR) response. The polypeptide is G protein-coupled receptor 88 (Gpr88) (Rattus norvegicus (Rat)).